Consider the following 358-residue polypeptide: Gap junction alpha-5 protein (358 aa).

Residues 1–19 are Cytoplasmic-facing; that stretch reads MGDWSFLGEFLEEVHKHST. The helical transmembrane segment at 20–40 threads the bilayer; the sequence is VIGKVWLTVLFIFRMLVLGTA. Residues 41 to 76 are Extracellular-facing; sequence AESSWGDEQADFRCDTIQPGCQNVCYDQAFPISHIR. A helical membrane pass occupies residues 77 to 97; it reads YWVLQIIFVSTPSLVYMGHAM. Residues 98–164 are Cytoplasmic-facing; sequence HTVRMQEKQK…CTILIRTTME (67 aa). The chain crosses the membrane as a helical span at residues 165–185; sequence VAFIVGQYLLYGIFLDTLHVC. Residues 186–205 lie on the Extracellular side of the membrane; the sequence is RRSPCPHPVNCYVSRPTEKN. A helical transmembrane segment spans residues 206–226; the sequence is VFIVFMMAVAGLSLFLSLAEL. Topologically, residues 227 to 358 are cytoplasmic; it reads YHLGWKKIRQ…SKARSDDLSV (132 aa). 2 disordered regions span residues 242 to 262 and 318 to 358; these read RQGV…QSLT and SQKP…DLSV. 2 positions are modified to phosphoserine: Ser353 and Ser357.

The protein belongs to the connexin family. Alpha-type (group II) subfamily. A connexon is composed of a hexamer of connexins. In terms of tissue distribution, abundantly expressed in the lung, also expressed in the kidney and heart.

The protein localises to the cell membrane. It localises to the cell junction. It is found in the gap junction. Functionally, one gap junction consists of a cluster of closely packed pairs of transmembrane channels, the connexons, through which materials of low MW diffuse from one cell to a neighboring cell. The sequence is that of Gap junction alpha-5 protein (Gja5) from Mus musculus (Mouse).